The chain runs to 386 residues: Succinate--CoA ligase [ADP-forming] subunit beta (386 aa).

The ATP-grasp domain maps to 9–244 (KELLRKYGVV…FDEEDADEIE (236 aa)). ATP-binding positions include Lys-46, 53 to 55 (GRG), Glu-99, Ala-102, and Glu-107. Residues Asn-199 and Asp-213 each coordinate Mg(2+). Substrate-binding positions include Asn-264 and 321 to 323 (GIM).

This sequence belongs to the succinate/malate CoA ligase beta subunit family. As to quaternary structure, heterotetramer of two alpha and two beta subunits. Mg(2+) serves as cofactor.

The catalysed reaction is succinate + ATP + CoA = succinyl-CoA + ADP + phosphate. It carries out the reaction GTP + succinate + CoA = succinyl-CoA + GDP + phosphate. The protein operates within carbohydrate metabolism; tricarboxylic acid cycle; succinate from succinyl-CoA (ligase route): step 1/1. Succinyl-CoA synthetase functions in the citric acid cycle (TCA), coupling the hydrolysis of succinyl-CoA to the synthesis of either ATP or GTP and thus represents the only step of substrate-level phosphorylation in the TCA. The beta subunit provides nucleotide specificity of the enzyme and binds the substrate succinate, while the binding sites for coenzyme A and phosphate are found in the alpha subunit. The protein is Succinate--CoA ligase [ADP-forming] subunit beta of Aromatoleum aromaticum (strain DSM 19018 / LMG 30748 / EbN1) (Azoarcus sp. (strain EbN1)).